We begin with the raw amino-acid sequence, 416 residues long: Serine hydroxymethyltransferase (416 aa).

(6S)-5,6,7,8-tetrahydrofolate-binding positions include leucine 118 and 122–124 (GHL). Lysine 226 is modified (N6-(pyridoxal phosphate)lysine). A (6S)-5,6,7,8-tetrahydrofolate-binding site is contributed by glutamate 242.

This sequence belongs to the SHMT family. In terms of assembly, homodimer. Requires pyridoxal 5'-phosphate as cofactor.

The protein localises to the cytoplasm. It catalyses the reaction (6R)-5,10-methylene-5,6,7,8-tetrahydrofolate + glycine + H2O = (6S)-5,6,7,8-tetrahydrofolate + L-serine. Its pathway is one-carbon metabolism; tetrahydrofolate interconversion. It participates in amino-acid biosynthesis; glycine biosynthesis; glycine from L-serine: step 1/1. Functionally, catalyzes the reversible interconversion of serine and glycine with tetrahydrofolate (THF) serving as the one-carbon carrier. This reaction serves as the major source of one-carbon groups required for the biosynthesis of purines, thymidylate, methionine, and other important biomolecules. Also exhibits THF-independent aldolase activity toward beta-hydroxyamino acids, producing glycine and aldehydes, via a retro-aldol mechanism. The sequence is that of Serine hydroxymethyltransferase from Helicobacter pylori (strain HPAG1).